The sequence spans 426 residues: 3-phosphoshikimate 1-carboxyvinyltransferase (426 aa).

Lys-22, Ser-23, and Arg-27 together coordinate 3-phosphoshikimate. Residue Lys-22 participates in phosphoenolpyruvate binding. Residues Gly-96 and Arg-124 each contribute to the phosphoenolpyruvate site. Positions 170, 171, 172, 198, 314, 337, and 341 each coordinate 3-phosphoshikimate. Gln-172 is a binding site for phosphoenolpyruvate. Residue Asp-314 is the Proton acceptor of the active site. Arg-345, Arg-387, and Lys-412 together coordinate phosphoenolpyruvate.

It belongs to the EPSP synthase family. Monomer.

It localises to the cytoplasm. The catalysed reaction is 3-phosphoshikimate + phosphoenolpyruvate = 5-O-(1-carboxyvinyl)-3-phosphoshikimate + phosphate. Its pathway is metabolic intermediate biosynthesis; chorismate biosynthesis; chorismate from D-erythrose 4-phosphate and phosphoenolpyruvate: step 6/7. In terms of biological role, catalyzes the transfer of the enolpyruvyl moiety of phosphoenolpyruvate (PEP) to the 5-hydroxyl of shikimate-3-phosphate (S3P) to produce enolpyruvyl shikimate-3-phosphate and inorganic phosphate. The chain is 3-phosphoshikimate 1-carboxyvinyltransferase from Shewanella woodyi (strain ATCC 51908 / MS32).